The sequence spans 220 residues: MSQRGRATRPTGPTGRPRRTGGQRSAGRVSRGGDLASRRARLHEVVEPVVGEAGYDLEELSISRAGRRHVVQVIVDADGGIDLDAVADVSRAVSAALDAAEEARGDIVAGEYQLEVSSPGVSRPLTLPRHWRRNAGRLVRVTVRGGPDAGDRQLTGRVVEADDEQVVLETDAGRAGWSYAELGPGRVQVEFTRPGETDGADGADEAGDFDDDDDVEGEER.

A compositionally biased stretch (low complexity) spans 1–15; the sequence is MSQRGRATRPTGPTG. Disordered regions lie at residues 1 to 35 and 184 to 220; these read MSQRGRATRPTGPTGRPRRTGGQRSAGRVSRGGDL and PGRVQVEFTRPGETDGADGADEAGDFDDDDDVEGEER. Residues 198–220 are compositionally biased toward acidic residues; sequence DGADGADEAGDFDDDDDVEGEER.

The protein belongs to the RimP family.

Its subcellular location is the cytoplasm. Functionally, required for maturation of 30S ribosomal subunits. This is Ribosome maturation factor RimP from Salinispora tropica (strain ATCC BAA-916 / DSM 44818 / JCM 13857 / NBRC 105044 / CNB-440).